The chain runs to 103 residues: UPF0145 protein NT01CX_0170 (103 aa).

It belongs to the UPF0145 family.

The polypeptide is UPF0145 protein NT01CX_0170 (Clostridium novyi (strain NT)).